Here is a 298-residue protein sequence, read N- to C-terminus: GTP cyclohydrolase FolE2 (298 aa).

The protein belongs to the GTP cyclohydrolase IV family.

The catalysed reaction is GTP + H2O = 7,8-dihydroneopterin 3'-triphosphate + formate + H(+). The protein operates within cofactor biosynthesis; 7,8-dihydroneopterin triphosphate biosynthesis; 7,8-dihydroneopterin triphosphate from GTP: step 1/1. Converts GTP to 7,8-dihydroneopterin triphosphate. This chain is GTP cyclohydrolase FolE2, found in Azotobacter vinelandii (strain DJ / ATCC BAA-1303).